A 679-amino-acid polypeptide reads, in one-letter code: Methionine--tRNA ligase (679 aa).

A 'HIGH' region motif is present at residues 15-25; the sequence is PYANGPVHIGH. Cysteine 147, cysteine 150, cysteine 160, and cysteine 163 together coordinate Zn(2+). The 'KMSKS' region signature appears at 332-336; sequence KISTS. Threonine 335 lines the ATP pocket. Residues 578–679 form the tRNA-binding domain; sequence DFMKLDIRVG…KEVKPGSEVK (102 aa).

It belongs to the class-I aminoacyl-tRNA synthetase family. MetG type 1 subfamily. In terms of assembly, homodimer. It depends on Zn(2+) as a cofactor.

It is found in the cytoplasm. The enzyme catalyses tRNA(Met) + L-methionine + ATP = L-methionyl-tRNA(Met) + AMP + diphosphate. Functionally, is required not only for elongation of protein synthesis but also for the initiation of all mRNA translation through initiator tRNA(fMet) aminoacylation. The chain is Methionine--tRNA ligase from Parabacteroides distasonis (strain ATCC 8503 / DSM 20701 / CIP 104284 / JCM 5825 / NCTC 11152).